A 278-amino-acid polypeptide reads, in one-letter code: Lipoyl-[GcvH]:protein N-lipoyltransferase (278 aa).

The BPL/LPL catalytic domain maps to 44–250 (RMAPSTVRGW…SLRHYAGDLV (207 aa)). Catalysis depends on Cys-149, which acts as the Acyl-thioester intermediate.

This sequence belongs to the octanoyltransferase LipL family.

It carries out the reaction N(6)-[(R)-lipoyl]-L-lysyl-[glycine-cleavage complex H protein] + L-lysyl-[lipoyl-carrier protein] = L-lysyl-[glycine-cleavage complex H protein] + N(6)-[(R)-lipoyl]-L-lysyl-[lipoyl-carrier protein]. It functions in the pathway protein modification; protein lipoylation via exogenous pathway. Its function is as follows. Catalyzes the amidotransfer (transamidation) of the lipoyl moiety from lipoyl-GcvH to the lipoyl domain of the E2 subunit of lipoate-dependent enzymes. Takes part in a pathway for scavenging of lipoic acid derived from eukaryotic host cells. Cannot use lipoyl-tripeptide (DK(L)A), lipoamide (LD), or free lipoate as substrate. The polypeptide is Lipoyl-[GcvH]:protein N-lipoyltransferase (Listeria monocytogenes serovar 1/2a (strain ATCC BAA-679 / EGD-e)).